We begin with the raw amino-acid sequence, 273 residues long: MEIRTFLERALKEDLGHGDLFERVLEKDFKATAFVRAKQEGVFSGEKYALELLEMTGIECVQTIKDKERFKPKDALMEIRGDFSMLLKVERTLLNLLQHSSGIATLTSRFVEALNSHKVRLLDTRKTRPLLRIFEKYSVLNGGASNHRLGLDDALMLKDTHLRHVKDLKSFLTHARKNLPFTAKIEIECESFEEAKNAMNAGADIVMCDNLSVLETKEIAAYRDAHYPFVLLEASGNISLESINAYAKSGVDAISVGALIHQATFIDMHMKMA.

Residues Arg91, 124 to 126 (TRK), Arg148, Lys158, Glu188, Asp209, 235 to 237 (SGN), and 256 to 258 (VGA) contribute to the substrate site.

The protein belongs to the NadC/ModD family. In terms of assembly, hexamer formed by 3 homodimers.

The catalysed reaction is nicotinate beta-D-ribonucleotide + CO2 + diphosphate = quinolinate + 5-phospho-alpha-D-ribose 1-diphosphate + 2 H(+). The protein operates within cofactor biosynthesis; NAD(+) biosynthesis; nicotinate D-ribonucleotide from quinolinate: step 1/1. In terms of biological role, involved in the catabolism of quinolinic acid (QA). The chain is Probable nicotinate-nucleotide pyrophosphorylase [carboxylating] (nadC) from Helicobacter pylori (strain ATCC 700392 / 26695) (Campylobacter pylori).